The primary structure comprises 419 residues: Serine hydroxymethyltransferase (419 aa).

Residues Leu121 and 125–127 (GHL) contribute to the (6S)-5,6,7,8-tetrahydrofolate site. At Lys230 the chain carries N6-(pyridoxal phosphate)lysine. 355-357 (SPF) is a (6S)-5,6,7,8-tetrahydrofolate binding site.

It belongs to the SHMT family. Homodimer. The cofactor is pyridoxal 5'-phosphate.

The protein resides in the cytoplasm. The catalysed reaction is (6R)-5,10-methylene-5,6,7,8-tetrahydrofolate + glycine + H2O = (6S)-5,6,7,8-tetrahydrofolate + L-serine. It participates in one-carbon metabolism; tetrahydrofolate interconversion. It functions in the pathway amino-acid biosynthesis; glycine biosynthesis; glycine from L-serine: step 1/1. Its function is as follows. Catalyzes the reversible interconversion of serine and glycine with tetrahydrofolate (THF) serving as the one-carbon carrier. This reaction serves as the major source of one-carbon groups required for the biosynthesis of purines, thymidylate, methionine, and other important biomolecules. Also exhibits THF-independent aldolase activity toward beta-hydroxyamino acids, producing glycine and aldehydes, via a retro-aldol mechanism. The chain is Serine hydroxymethyltransferase from Streptococcus equi subsp. zooepidemicus (strain H70).